The sequence spans 254 residues: Glycerol operon regulatory protein (254 aa).

An HTH iclR-type domain is found at 5–67; that stretch reads IQSLERAAAM…DASGRYQLGA (63 aa). The H-T-H motif DNA-binding region spans 27 to 46; that stretch reads LSDIASSLGLAKGTAHGILR. One can recognise an IclR-ED domain in the interval 82-251; that stretch reads LRARALVWTD…ARAVSRDLGA (170 aa).

May be an activator protein for the gylABX operon. This is Glycerol operon regulatory protein (gylR) from Streptomyces coelicolor (strain ATCC BAA-471 / A3(2) / M145).